A 71-amino-acid polypeptide reads, in one-letter code: Exodeoxyribonuclease 7 small subunit (71 aa).

Belongs to the XseB family. As to quaternary structure, heterooligomer composed of large and small subunits.

It localises to the cytoplasm. It catalyses the reaction Exonucleolytic cleavage in either 5'- to 3'- or 3'- to 5'-direction to yield nucleoside 5'-phosphates.. Its function is as follows. Bidirectionally degrades single-stranded DNA into large acid-insoluble oligonucleotides, which are then degraded further into small acid-soluble oligonucleotides. The chain is Exodeoxyribonuclease 7 small subunit from Streptococcus pyogenes serotype M1.